A 305-amino-acid chain; its full sequence is Tyrosine recombinase XerC (305 aa).

A Core-binding (CB) domain is found at threonine 4–glutamate 95. The Tyr recombinase domain maps to leucine 116–threonine 298. Active-site residues include arginine 159, lysine 182, histidine 250, arginine 253, and histidine 276. Tyrosine 285 (O-(3'-phospho-DNA)-tyrosine intermediate) is an active-site residue.

This sequence belongs to the 'phage' integrase family. XerC subfamily. As to quaternary structure, forms a cyclic heterotetrameric complex composed of two molecules of XerC and two molecules of XerD.

It is found in the cytoplasm. Its function is as follows. Site-specific tyrosine recombinase, which acts by catalyzing the cutting and rejoining of the recombining DNA molecules. The XerC-XerD complex is essential to convert dimers of the bacterial chromosome into monomers to permit their segregation at cell division. It also contributes to the segregational stability of plasmids. This is Tyrosine recombinase XerC from Rickettsia massiliae (strain Mtu5).